A 74-amino-acid polypeptide reads, in one-letter code: uncharacterized protein (74 aa).

This is an uncharacterized protein from Saccharomyces cerevisiae (strain ATCC 204508 / S288c) (Baker's yeast).